Consider the following 701-residue polypeptide: Polyribonucleotide nucleotidyltransferase (701 aa).

Residues Asp-487 and Asp-493 each coordinate Mg(2+). Residues 554–613 enclose the KH domain; sequence PTMIAMKIDTDKIRDVIGKGGATIRAICEETKASIDIEDDGSIKIFGETKEAAEAARQRV. Positions 623–691 constitute an S1 motif domain; it reads GKIYVGKVER…NRGRIKLSIK (69 aa).

It belongs to the polyribonucleotide nucleotidyltransferase family. Component of the RNA degradosome, which is a multiprotein complex involved in RNA processing and mRNA degradation. Mg(2+) is required as a cofactor.

Its subcellular location is the cytoplasm. The catalysed reaction is RNA(n+1) + phosphate = RNA(n) + a ribonucleoside 5'-diphosphate. Involved in mRNA degradation. Catalyzes the phosphorolysis of single-stranded polyribonucleotides processively in the 3'- to 5'-direction. This Pseudomonas fluorescens (strain SBW25) protein is Polyribonucleotide nucleotidyltransferase.